The sequence spans 444 residues: Crh-like protein 3 (444 aa).

Residues 1 to 19 (MVGKSTLLSVLASASVAFA) form the signal peptide. Cys27 and Cys34 are disulfide-bonded. Residues 57–271 (SLESCVPEPV…WAGGEIDWNS (215 aa)) enclose the GH16 domain. Residue Glu157 is the Nucleophile of the active site. The active-site Proton donor is Glu161. Residue Glu161 coordinates chitin. 2 N-linked (GlcNAc...) asparagine glycosylation sites follow: Asn187 and Asn228. Trp248 and Thr259 together coordinate chitin. 4 N-linked (GlcNAc...) asparagine glycosylation sites follow: Asn315, Asn323, Asn336, and Asn371. Ser415 carries the GPI-anchor amidated serine lipid modification. A propeptide spans 416–444 (ADSLVANQERVLKGSLFAGIVAVVAMMAL) (removed in mature form).

Belongs to the glycosyl hydrolase 16 family. CRH1 subfamily. Forms homodimers as well as heterodimers with other crh protein members crh1 and crh2. Dimerization may be necessary for the transglycosylation activity.

It is found in the cell membrane. It catalyses the reaction Random endo-hydrolysis of N-acetyl-beta-D-glucosaminide (1-&gt;4)-beta-linkages in chitin and chitodextrins.. In terms of biological role, dual chitinase/transglycosylase that plays a role in cell wall architecture. Chitinase and transglycosylase activities are coupled. Required for the polysaccharide cross-linking at the septa and the cell wall. More specifically, transfers chitin to 1,6-beta-glucan in the cell wall. This is Crh-like protein 3 from Botryotinia fuckeliana (strain B05.10) (Noble rot fungus).